The following is a 253-amino-acid chain: ATP synthase subunit b 2 (253 aa).

The helical transmembrane segment at 9 to 27 (VLEIVNFLVLVWLLKRFLY) threads the bilayer.

This sequence belongs to the ATPase B chain family. As to quaternary structure, F-type ATPases have 2 components, F(1) - the catalytic core - and F(0) - the membrane proton channel. F(1) has five subunits: alpha(3), beta(3), gamma(1), delta(1), epsilon(1). F(0) has three main subunits: a(1), b(2) and c(10-14). The alpha and beta chains form an alternating ring which encloses part of the gamma chain. F(1) is attached to F(0) by a central stalk formed by the gamma and epsilon chains, while a peripheral stalk is formed by the delta and b chains.

It localises to the cell inner membrane. F(1)F(0) ATP synthase produces ATP from ADP in the presence of a proton or sodium gradient. F-type ATPases consist of two structural domains, F(1) containing the extramembraneous catalytic core and F(0) containing the membrane proton channel, linked together by a central stalk and a peripheral stalk. During catalysis, ATP synthesis in the catalytic domain of F(1) is coupled via a rotary mechanism of the central stalk subunits to proton translocation. Its function is as follows. Component of the F(0) channel, it forms part of the peripheral stalk, linking F(1) to F(0). This is ATP synthase subunit b 2 from Methylococcus capsulatus (strain ATCC 33009 / NCIMB 11132 / Bath).